Here is a 153-residue protein sequence, read N- to C-terminus: Methylglyoxal synthase (153 aa).

Residues 3-153 (DQVNRPKGVT…SYLSRDVPGN (151 aa)) enclose the MGS-like domain. Residues His-19, Lys-23, 45–48 (TGTT), and 65–66 (SG) contribute to the substrate site. The active-site Proton donor/acceptor is the Asp-71. Residue His-98 coordinates substrate.

Belongs to the methylglyoxal synthase family.

It catalyses the reaction dihydroxyacetone phosphate = methylglyoxal + phosphate. Its function is as follows. Catalyzes the formation of methylglyoxal from dihydroxyacetone phosphate. The protein is Methylglyoxal synthase of Hahella chejuensis (strain KCTC 2396).